The primary structure comprises 382 residues: Glycerate kinase (382 aa).

The protein belongs to the glycerate kinase type-1 family.

It carries out the reaction (R)-glycerate + ATP = (2R)-3-phosphoglycerate + ADP + H(+). This is Glycerate kinase (glxK) from Bacillus subtilis (strain 168).